We begin with the raw amino-acid sequence, 117 residues long: Small ribosomal subunit protein uS13 (117 aa).

Positions 94 to 117 (SLPLRGQRTKTNARTRKGPRRLIK) are disordered.

Belongs to the universal ribosomal protein uS13 family. Part of the 30S ribosomal subunit. Forms a loose heterodimer with protein S19. Forms two bridges to the 50S subunit in the 70S ribosome.

Located at the top of the head of the 30S subunit, it contacts several helices of the 16S rRNA. In the 70S ribosome it contacts the 23S rRNA (bridge B1a) and protein L5 of the 50S subunit (bridge B1b), connecting the 2 subunits; these bridges are implicated in subunit movement. Contacts the tRNAs in the A and P-sites. The sequence is that of Small ribosomal subunit protein uS13 from Vesicomyosocius okutanii subsp. Calyptogena okutanii (strain HA).